The following is a 142-amino-acid chain: Large ribosomal subunit protein uL13 (142 aa).

Belongs to the universal ribosomal protein uL13 family. In terms of assembly, part of the 50S ribosomal subunit.

This protein is one of the early assembly proteins of the 50S ribosomal subunit, although it is not seen to bind rRNA by itself. It is important during the early stages of 50S assembly. The polypeptide is Large ribosomal subunit protein uL13 (Edwardsiella ictaluri (strain 93-146)).